Reading from the N-terminus, the 254-residue chain is MTKLEVCCYSVDCAQIAEKAGADRVELCCGQSEGGVTPSVGALMQARETVTIPVHPIVRPRGGDFCYSSNDFTIMKNDIARIRDLGFAGVVVGVLDTDGHIDMPRMREIMSVSGSLAVTFHRAFDMCQNPMIALKQLAELNVARILTSGQQQNAELGLALLKDLVAATKDQGPIIMAGAGVRLTNMQKFIDAGIRELHSSAGRTVPSTMRYRKAGVTMCADSDVDEFSHYCVDGEVVEAMKSLLVMGSPLAKHT.

The protein belongs to the CutC family.

It localises to the cytoplasm. The polypeptide is PF03932 family protein CutC (Yersinia pestis bv. Antiqua (strain Antiqua)).